Reading from the N-terminus, the 506-residue chain is Dolabradiene monooxygenase (506 aa).

A helical transmembrane segment spans residues 5 to 25 (VLLAVAMVALIAVLSKLKSLL). Residue C443 coordinates heme.

Belongs to the cytochrome P450 family. The cofactor is heme.

It is found in the membrane. It carries out the reaction dolabradiene + reduced [NADPH--hemoprotein reductase] + O2 = 15,16-epoxydolabrene + oxidized [NADPH--hemoprotein reductase] + H2O + H(+). It catalyses the reaction 15,16-epoxydolabrene + reduced [NADPH--hemoprotein reductase] + O2 = 3beta-hydroxy-15,16-epoxydolabrene + oxidized [NADPH--hemoprotein reductase] + H2O + H(+). In terms of biological role, involved in the production of antifungal dolabralexin phytoalexins in response to biotic and abiotic stresses. Catalyzes the epoxidation of dolabradiene at C-16, followed by hydroxylation at C-3, to yield the epoxides 15,16-epoxydolabrene (epoxydolabrene) and 3b-hydroxy-15,16-epoxydolabrene (epoxydolabranol). This Zea mays (Maize) protein is Dolabradiene monooxygenase.